A 70-amino-acid chain; its full sequence is Cytoinsectotoxin-2c (70 aa).

This sequence belongs to the cationic peptide 06 (cytoinsectotoxin) family. As to expression, expressed by the venom gland.

Its subcellular location is the secreted. Insecticidal and antimicrobial peptide. Has insecticidal activity against larvae of flesh fly S.carnaria. Has antibacterial activity against Gram-positive bacterium B.subtilis B-501 (MIC=1.25 uM) and Gram-negative bacterium E.coli DH5alpha (MIC=2.5 uM). This Lachesana tarabaevi (Spider) protein is Cytoinsectotoxin-2c.